The sequence spans 140 residues: Active regulator of SIRT1 (140 aa).

2 disordered regions span residues 1–52 (MSAS…KNKA) and 95–123 (QQVL…EGTV). The segment covering 108–120 (DRPAEKKEKKKPE) has biased composition (basic and acidic residues).

Belongs to the AROS family. Part of the small subunit (SSU) processome, composed of more than 70 proteins and the RNA chaperone small nucleolar RNA (snoRNA) U3.

It is found in the nucleus. It localises to the nucleolus. In terms of biological role, part of the small subunit (SSU) processome, first precursor of the small eukaryotic ribosomal subunit. During the assembly of the SSU processome in the nucleolus, many ribosome biogenesis factors, an RNA chaperone and ribosomal proteins associate with the nascent pre-rRNA and work in concert to generate RNA folding, modifications, rearrangements and cleavage as well as targeted degradation of pre-ribosomal RNA by the RNA exosome. Acts as a chaperone that specifically mediates the integration of RPS19 in state post-A1. Direct regulator of SIRT1. The chain is Active regulator of SIRT1 (RPS19BP1) from Gallus gallus (Chicken).